The chain runs to 412 residues: UPF0754 membrane protein Synpcc7942_1098 (412 aa).

A run of 2 helical transmembrane segments spans residues 8 to 28 and 390 to 410; these read LWLL…DLAI and IGGV…VWSL.

Belongs to the UPF0754 family.

It is found in the cell inner membrane. This chain is UPF0754 membrane protein Synpcc7942_1098, found in Synechococcus elongatus (strain ATCC 33912 / PCC 7942 / FACHB-805) (Anacystis nidulans R2).